The primary structure comprises 381 residues: Cytochrome b (381 aa).

The next 4 membrane-spanning stretches (helical) occupy residues 34–54 (FGSL…MLAM), 78–99 (WMIR…YLHI), 114–134 (WNTG…GYVL), and 179–199 (FFAL…VHLT). The heme b site is built by His84 and His98. Heme b is bound by residues His183 and His197. His202 serves as a coordination point for a ubiquinone. 4 helical membrane passes run 227-247 (MKDL…AFFT), 289-309 (LGGV…PLLH), 321-341 (MSQI…WVGS), and 348-368 (FIII…FLFP).

The protein belongs to the cytochrome b family. As to quaternary structure, the cytochrome bc1 complex contains 11 subunits: 3 respiratory subunits (MT-CYB, CYC1 and UQCRFS1), 2 core proteins (UQCRC1 and UQCRC2) and 6 low-molecular weight proteins (UQCRH/QCR6, UQCRB/QCR7, UQCRQ/QCR8, UQCR10/QCR9, UQCR11/QCR10 and a cleavage product of UQCRFS1). This cytochrome bc1 complex then forms a dimer. It depends on heme b as a cofactor.

The protein localises to the mitochondrion inner membrane. Functionally, component of the ubiquinol-cytochrome c reductase complex (complex III or cytochrome b-c1 complex) that is part of the mitochondrial respiratory chain. The b-c1 complex mediates electron transfer from ubiquinol to cytochrome c. Contributes to the generation of a proton gradient across the mitochondrial membrane that is then used for ATP synthesis. The sequence is that of Cytochrome b (MT-CYB) from Nothoprocta perdicaria (Chilean tinamou).